Here is a 110-residue protein sequence, read N- to C-terminus: Large ribosomal subunit protein uL22 (110 aa).

This sequence belongs to the universal ribosomal protein uL22 family. As to quaternary structure, part of the 50S ribosomal subunit.

In terms of biological role, this protein binds specifically to 23S rRNA; its binding is stimulated by other ribosomal proteins, e.g. L4, L17, and L20. It is important during the early stages of 50S assembly. It makes multiple contacts with different domains of the 23S rRNA in the assembled 50S subunit and ribosome. Functionally, the globular domain of the protein is located near the polypeptide exit tunnel on the outside of the subunit, while an extended beta-hairpin is found that lines the wall of the exit tunnel in the center of the 70S ribosome. The polypeptide is Large ribosomal subunit protein uL22 (Pseudoalteromonas translucida (strain TAC 125)).